A 118-amino-acid chain; its full sequence is MASLRVSCLVALMCMVVISAPMAEAAISCGTVSGALVPCLTYLKGGPGPSPQCCGGVKRLNGAARTTIDRRAACNCLKSSAGSISGLKPGNVATLPGKCGVRLPYTISTSTNCNTIRF.

Positions 1-25 (MASLRVSCLVALMCMVVISAPMAEA) are cleaved as a signal peptide. 4 disulfide bridges follow: Cys-29/Cys-76, Cys-39/Cys-53, Cys-54/Cys-99, and Cys-74/Cys-113.

The protein belongs to the plant LTP family.

Its function is as follows. Plant non-specific lipid-transfer proteins transfer phospholipids as well as galactolipids across membranes. May play a role in wax or cutin deposition in the cell walls of expanding epidermal cells and certain secretory tissues. The polypeptide is Non-specific lipid-transfer protein 1 (Lens culinaris (Lentil)).